A 467-amino-acid polypeptide reads, in one-letter code: Septin-10 (467 aa).

One can recognise a Septin-type G domain in the interval 63 to 329 (QGFCFNILCV…ELYRRCKLEE (267 aa)). The segment at 73–80 (GETGIGKS) is G1 motif. GTP is bound by residues 73–80 (GETGIGKS), Gly128, 209–217 (KADTVSKTE), Gly263, and Arg278. The tract at residues 125–128 (NTVG) is G3 motif. Residues 208-211 (AKAD) form a G4 motif region.

This sequence belongs to the TRAFAC class TrmE-Era-EngA-EngB-Septin-like GTPase superfamily. Septin GTPase family. As to quaternary structure, septins polymerize into heterooligomeric protein complexes that form filaments, and can associate with cellular membranes, actin filaments and microtubules. GTPase activity is required for filament formation. Interacts with ADGB. Post-translationally, proteolytically cleaved in vitro in a calmodulin-dependent manner.

It is found in the cytoplasm. It localises to the cytoskeleton. Its subcellular location is the cell projection. The protein resides in the cilium. The protein localises to the flagellum. Filament-forming cytoskeletal GTPase. May play a role in cytokinesis (Potential). In Pongo abelii (Sumatran orangutan), this protein is Septin-10.